The following is a 394-amino-acid chain: Elongation factor Tu (394 aa).

The region spanning 10 to 204 (KPHVNIGTIG…AVDSYIPQPV (195 aa)) is the tr-type G domain. The segment at 19-26 (GHVDHGKT) is G1. Residue 19 to 26 (GHVDHGKT) coordinates GTP. Thr26 contributes to the Mg(2+) binding site. A G2 region spans residues 60–64 (GITIS). A G3 region spans residues 81 to 84 (DCPG). Residues 81 to 85 (DCPGH) and 136 to 139 (NKID) each bind GTP. Residues 136 to 139 (NKID) form a G4 region. The G5 stretch occupies residues 174–176 (SAL).

This sequence belongs to the TRAFAC class translation factor GTPase superfamily. Classic translation factor GTPase family. EF-Tu/EF-1A subfamily. As to quaternary structure, monomer.

It localises to the cytoplasm. The catalysed reaction is GTP + H2O = GDP + phosphate + H(+). Functionally, GTP hydrolase that promotes the GTP-dependent binding of aminoacyl-tRNA to the A-site of ribosomes during protein biosynthesis. The sequence is that of Elongation factor Tu from Rickettsia rickettsii.